A 502-amino-acid chain; its full sequence is 4,4'-diapophytoene desaturase (4,4'-diaponeurosporene-forming) (502 aa).

5 to 17 (VIGAGVTGLAAAA) contributes to the FAD binding site.

It belongs to the carotenoid/retinoid oxidoreductase family. CrtN subfamily.

It carries out the reaction 15-cis-4,4'-diapophytoene + 3 FAD + 3 H(+) = all-trans-4,4'-diaponeurosporene + 3 FADH2. The protein operates within carotenoid biosynthesis; staphyloxanthin biosynthesis; staphyloxanthin from farnesyl diphosphate: step 2/5. In terms of biological role, involved in the biosynthesis of the yellow-orange carotenoid staphyloxanthin, which plays a role in the virulence via its protective function against oxidative stress. Catalyzes three successive dehydrogenation reactions that lead to the introduction of three double bonds into 4,4'-diapophytoene (dehydrosqualene), with 4,4'-diapophytofluene and 4,4'-diapo-zeta-carotene as intermediates, and 4,4'-diaponeurosporene (the major deep-yellow pigment in staphylococci strains) as the end product. The chain is 4,4'-diapophytoene desaturase (4,4'-diaponeurosporene-forming) from Staphylococcus aureus (strain MW2).